The chain runs to 689 residues: Methionine--tRNA ligase (689 aa).

The 'HIGH' region motif lies at proline 15–histidine 25. Zn(2+) contacts are provided by cysteine 146, cysteine 149, cysteine 159, and cysteine 162. The 'KMSKS' region motif lies at lysine 332–serine 336. Lysine 335 lines the ATP pocket. One can recognise a tRNA-binding domain in the interval aspartate 588 to lysine 689.

It belongs to the class-I aminoacyl-tRNA synthetase family. MetG type 1 subfamily. Homodimer. It depends on Zn(2+) as a cofactor.

Its subcellular location is the cytoplasm. It carries out the reaction tRNA(Met) + L-methionine + ATP = L-methionyl-tRNA(Met) + AMP + diphosphate. Its function is as follows. Is required not only for elongation of protein synthesis but also for the initiation of all mRNA translation through initiator tRNA(fMet) aminoacylation. This Shewanella sp. (strain W3-18-1) protein is Methionine--tRNA ligase.